The sequence spans 239 residues: MGSCQAGHYLHFCLAHHPPLVCATLILLLLGLSGLGLGGFLLTHRTDLRSPDIPQDWVSFLRSFGQLTLCPVNGTVTGKGRGSHIVGLLTTLNFGDGPDRNKTQTFQAQVQGSRMGLKGSFARELVLVTARVTTERTPGTCLYFSAIPEILPSSQPPIPCSEEGAGNATLSPRMSEECVGVWSHEGLVLTKLLTSEELTLCGSRLLVLGFFLILFCGLCCLTAACFHPRRESHWSRTRL.

The first 38 residues, M1–G38, serve as a signal peptide directing secretion. At G39–L205 the chain is on the extracellular side. Residues N101 and N167 are each glycosylated (N-linked (GlcNAc...) asparagine). A helical transmembrane segment spans residues L206–F226. Over H227 to L239 the chain is Cytoplasmic.

In terms of assembly, interacts with IGFBP3. Interacts with CASP8.

Its subcellular location is the cell membrane. In terms of biological role, cell death receptor specific for IGFBP3, may mediate caspase-8-dependent apoptosis upon ligand binding. The polypeptide is Insulin-like growth factor-binding protein 3 receptor (TMEM219) (Bos taurus (Bovine)).